The following is a 211-amino-acid chain: MHFRYNYRMQRSKTPNTKNSDTGSIPGNIILIGMMGSGKTTVGKLLANLVGKTFIDIDHEIQRRTGVGIPVIFEIEGEAGFRKRESEVLRDIVRQQNIVLATGGGAILHPDNRALLRQHGTVVYLCAPVTELRRRTYLDKNRPLLQTGNVHAKLIELFTQRDPLYRETAHIIMDSGRQSARAFVQKLIQKLRQSNQEFTAAGSPPCVKPSE.

A disordered region spans residues 1-22 (MHFRYNYRMQRSKTPNTKNSDT). Polar residues predominate over residues 12–22 (SKTPNTKNSDT). Residue 36 to 41 (GSGKTT) coordinates ATP. Mg(2+) is bound at residue threonine 40. 3 residues coordinate substrate: aspartate 58, arginine 82, and glycine 104. Arginine 142 provides a ligand contact to ATP. Arginine 161 contributes to the substrate binding site. Glutamine 178 serves as a coordination point for ATP.

This sequence belongs to the shikimate kinase family. Monomer. Mg(2+) is required as a cofactor.

It is found in the cytoplasm. It carries out the reaction shikimate + ATP = 3-phosphoshikimate + ADP + H(+). Its pathway is metabolic intermediate biosynthesis; chorismate biosynthesis; chorismate from D-erythrose 4-phosphate and phosphoenolpyruvate: step 5/7. In terms of biological role, catalyzes the specific phosphorylation of the 3-hydroxyl group of shikimic acid using ATP as a cosubstrate. The sequence is that of Shikimate kinase from Nitrosomonas europaea (strain ATCC 19718 / CIP 103999 / KCTC 2705 / NBRC 14298).